The sequence spans 1333 residues: Protein CLASP-1 (1333 aa).

The stretch at 168–206 is one HEAT 1 repeat; it reads LIPQLCRLTNDPNSEVRDASTNCLVDLMVFGGKSIIAKI. A compositionally biased stretch (low complexity) spans 269–305; sequence STTSFTSSARLSTPPRTNAPSLSPSPSTPSPLSLPAA. Residues 269–311 form a disordered region; the sequence is STTSFTSSARLSTPPRTNAPSLSPSPSTPSPLSLPAANGRSRD. A coiled-coil region spans residues 360-389; that stretch reads SNSDVREKLETANSVLRNANEDWSKRANQL. 2 disordered regions span residues 579–711 and 764–792; these read QKML…HQTP and TPPK…NSSN. Residues 601–611 show a composition bias toward low complexity; it reads NQKQPQQPQQN. Positions 612–644 are enriched in polar residues; it reads ISQKFLSQRSASALDNKSQVLSIAKPQQSNPSR. Composition is skewed to low complexity over residues 657–669 and 686–707; these read SSTS…VRSS and TNFN…STST. The stretch at 1266–1304 is one HEAT 2 repeat; it reads VAPCFVSAYDSTSSSVRKCAVFGLVALVQRVGMPRLETH.

The protein belongs to the CLASP family.

Its subcellular location is the cytoplasm. It localises to the cytoskeleton. Its function is as follows. Microtubule plus-end tracking protein that promotes the stabilization of dynamic microtubules. This is Protein CLASP-1 from Caenorhabditis briggsae.